Consider the following 167-residue polypeptide: 2-C-methyl-D-erythritol 2,4-cyclodiphosphate synthase (167 aa).

Residues Asp10 and His12 each contribute to the a divalent metal cation site. Residues 10–12 and 36–37 each bind 4-CDP-2-C-methyl-D-erythritol 2-phosphate; these read DVH and HS. His44 lines the a divalent metal cation pocket. 4-CDP-2-C-methyl-D-erythritol 2-phosphate-binding positions include 58–60, 63–67, 134–137, Phe141, and Arg144; these read NIG, FPNTN, and TTSE.

Belongs to the IspF family. As to quaternary structure, homotrimer. A divalent metal cation is required as a cofactor.

It catalyses the reaction 4-CDP-2-C-methyl-D-erythritol 2-phosphate = 2-C-methyl-D-erythritol 2,4-cyclic diphosphate + CMP. It functions in the pathway isoprenoid biosynthesis; isopentenyl diphosphate biosynthesis via DXP pathway; isopentenyl diphosphate from 1-deoxy-D-xylulose 5-phosphate: step 4/6. Functionally, involved in the biosynthesis of isopentenyl diphosphate (IPP) and dimethylallyl diphosphate (DMAPP), two major building blocks of isoprenoid compounds. Catalyzes the conversion of 4-diphosphocytidyl-2-C-methyl-D-erythritol 2-phosphate (CDP-ME2P) to 2-C-methyl-D-erythritol 2,4-cyclodiphosphate (ME-CPP) with a corresponding release of cytidine 5-monophosphate (CMP). The polypeptide is 2-C-methyl-D-erythritol 2,4-cyclodiphosphate synthase (Azobacteroides pseudotrichonymphae genomovar. CFP2).